We begin with the raw amino-acid sequence, 377 residues long: Probable aspartic-type endopeptidase CTSD (377 aa).

One can recognise a Peptidase A1 domain in the interval 1–292 (SLIDTGASRT…DFDKNRVGLA (292 aa)). Asp-4 is a catalytic residue. Asn-58 carries N-linked (GlcNAc...) asparagine glycosylation. Asp-186 is a catalytic residue. The segment at 296–351 (YGETKDPPSSSHPPPAPTSNKASGGSPGLPEQSGTSSATTSTTGEPSSGSTASPSA) is disordered. Positions 328–351 (SGTSSATTSTTGEPSSGSTASPSA) are enriched in low complexity. A lipid anchor (GPI-anchor amidated serine) is attached at Ser-350. A propeptide spans 351–377 (AASSVSMSAWLSLAVFLSTASSLILWD) (removed in mature form).

This sequence belongs to the peptidase A1 family.

It is found in the cell membrane. In terms of biological role, secreted aspartic-type endopeptidase which is secreted and contributes to virulence. The chain is Probable aspartic-type endopeptidase CTSD (CTSD) from Arthroderma otae (strain ATCC MYA-4605 / CBS 113480) (Microsporum canis).